The following is a 223-amino-acid chain: Killer cell lectin-like receptor subfamily B member 1A (223 aa).

Over 1–43 the chain is Cytoplasmic; that stretch reads MDTARVYLSLKPSKTAAGAQCVSPPSLPPDACRCPRSHRLALK. Positions 32–35 match the LCK-binding motif motif; that stretch reads CRCP. A helical; Signal-anchor for type II membrane protein transmembrane segment spans residues 44-63; that stretch reads LSCAGLILLVLALVGMSILV. Topologically, residues 64 to 223 are extracellular; it reads RVLVQKPSVE…LKCECMCNDS (160 aa). Residues 93–212 form the C-type lectin domain; that stretch reads KCPKDWLSHR…DSDNIWVCQK (120 aa). Cystine bridges form between Cys94/Cys105, Cys122/Cys210, and Cys189/Cys202.

In terms of assembly, homodimer; disulfide-linked. Interacts with tyrosine kinase LCK. In terms of tissue distribution, expressed in natural killer cells.

It is found in the membrane. Functionally, plays a stimulatory role on natural killer (NK) cell cytotoxicity. This is Killer cell lectin-like receptor subfamily B member 1A (Klrb1a) from Rattus norvegicus (Rat).